Here is a 140-residue protein sequence, read N- to C-terminus: Large ribosomal subunit protein uL16 (140 aa).

Residues 1-14 are compositionally biased toward basic residues; that stretch reads MLSPRRTKFRKQQR. Residues 1–22 form a disordered region; it reads MLSPRRTKFRKQQRGRMEGAAT.

Belongs to the universal ribosomal protein uL16 family. As to quaternary structure, part of the 50S ribosomal subunit.

Its function is as follows. Binds 23S rRNA and is also seen to make contacts with the A and possibly P site tRNAs. The chain is Large ribosomal subunit protein uL16 from Cyanothece sp. (strain PCC 7425 / ATCC 29141).